The primary structure comprises 226 residues: MTSRTAQVSRITNETKIQISISLTGGPIERPQPSLFASEKGANTAGPDDASQTTASQTIDIHTGVGFLDHMIHALAKHAGWSLIVECIGDLHIDDHHTTEDCGIALGEAFKEALGAVRGIKRFGSGFAPLDEALSRAVVDISNRPLAVIELGLKRERIGDLSCEMIPHFLESFAEAARITLHVDCLRGFNDHHRSESAFKALAVAIREAISSNGTNDVPSTKGVLM.

The segment at 23–55 is disordered; the sequence is LTGGPIERPQPSLFASEKGANTAGPDDASQTTA.

This sequence belongs to the imidazoleglycerol-phosphate dehydratase family.

It carries out the reaction D-erythro-1-(imidazol-4-yl)glycerol 3-phosphate = 3-(imidazol-4-yl)-2-oxopropyl phosphate + H2O. It participates in amino-acid biosynthesis; L-histidine biosynthesis; L-histidine from 5-phospho-alpha-D-ribose 1-diphosphate: step 6/9. This is Imidazoleglycerol-phosphate dehydratase (HIS3) from Maudiozyma humilis (Sour dough yeast).